A 42-amino-acid chain; its full sequence is Potassium channel toxin gamma-KTx 1.4 (42 aa).

4 disulfide bridges follow: cysteine 5–cysteine 23, cysteine 11–cysteine 34, cysteine 20–cysteine 39, and cysteine 24–cysteine 41.

Belongs to the ergtoxin family. Gamma-KTx 1 subfamily. Expressed by the venom gland.

The protein resides in the secreted. In terms of biological role, blocks Kv11/ERG potassium channels. This chain is Potassium channel toxin gamma-KTx 1.4, found in Centruroides sculpturatus (Arizona bark scorpion).